The primary structure comprises 751 residues: Phosphate transporter PHO1 homolog 8 (751 aa).

One can recognise an SPX domain in the interval 1–299 (MKFGKEYVAQ…LRNAAKLYME (299 aa)). Over 1-351 (MKFGKEYVAQ…KVTKEKHRIT (351 aa)) the chain is Cytoplasmic. The helical transmembrane segment at 352–372 (FSTGFFVGCTVSLVIALGLFI) threads the bilayer. Residues 373–392 (HARNIMGAVGHKLYMETMFP) are Extracellular-facing. The helical transmembrane segment at 393-413 (LYSLFAFVVLHMIMYASNIYF) threads the bilayer. At 414-434 (WKRYRVNYPFIFGFKEGTELG) the chain is on the cytoplasmic side. Residues 435–455 (YGHVLLLSFGLGTLALCAVLV) traverse the membrane as a helical segment. Over 456 to 473 (NMDMEMDPNTNDYKTITE) the chain is Extracellular. The helical transmembrane segment at 474-494 (LVPLFVVALVIAISVCPFNIF) threads the bilayer. The Cytoplasmic portion of the chain corresponds to 495-623 (YRSSRFFFLM…FSINRGNDWK (129 aa)). The 194-residue stretch at 558-751 (KSSDVYSTFY…NYDEEEDRDS (194 aa)) folds into the EXS domain. Residues 624-644 (IAAWVFSGLATFYGTYWDIVY) form a helical membrane-spanning segment. Residues 645–667 (DWGLLHRPSKSWLREKLLVPHKS) lie on the Extracellular side of the membrane. A helical transmembrane segment spans residues 668–688 (VYYVAMVVNVVLRLAWLQTVL). Topologically, residues 689-751 (DFNISFLHRE…NYDEEEDRDS (63 aa)) are cytoplasmic.

This sequence belongs to the SYG1 (TC 2.A.94) family. As to expression, expressed in root epidermis, leaf hydathodes, trichomes and petioles, stem vascular cylinder, receptacle, stigma apex and pollen grains.

It is found in the cell membrane. Its function is as follows. May transport inorganic phosphate (Pi). The protein is Phosphate transporter PHO1 homolog 8 (PHO1-H8) of Arabidopsis thaliana (Mouse-ear cress).